Here is a 78-residue protein sequence, read N- to C-terminus: Apolipoprotein C-I (78 aa).

Positions 1–26 (MRLILCLPVLVVVLLMVLEGPAPAQG) are cleaved as a signal peptide.

This sequence belongs to the apolipoprotein C1 family.

The protein localises to the secreted. In terms of biological role, inhibitor of lipoprotein binding to the low density lipoprotein (LDL) receptor, LDL receptor-related protein, and very low density lipoprotein (VLDL) receptor. Associates with high density lipoproteins (HDL) and the triacylglycerol-rich lipoproteins in the plasma and makes up about 10% of the protein of the VLDL and 2% of that of HDL. Appears to interfere directly with fatty acid uptake and is also the major plasma inhibitor of cholesteryl ester transfer protein (CETP). Binds free fatty acids and reduces their intracellular esterification. Modulates the interaction of APOE with beta-migrating VLDL and inhibits binding of beta-VLDL to the LDL receptor-related protein. This Acinonyx jubatus (Cheetah) protein is Apolipoprotein C-I (APOC1).